Here is a 226-residue protein sequence, read N- to C-terminus: ATP-dependent dethiobiotin synthetase BioD (226 aa).

13–18 (DVGKTL) contributes to the ATP binding site. Threonine 17 lines the Mg(2+) pocket. Residue lysine 38 is part of the active site. ATP is bound by residues aspartate 55, 117-120 (EGAG), 177-178 (NR), 206-208 (PFV), and glutamate 213. Mg(2+) contacts are provided by aspartate 55 and glutamate 117.

Belongs to the dethiobiotin synthetase family. Homodimer. Mg(2+) serves as cofactor.

Its subcellular location is the cytoplasm. The enzyme catalyses (7R,8S)-7,8-diammoniononanoate + CO2 + ATP = (4R,5S)-dethiobiotin + ADP + phosphate + 3 H(+). It functions in the pathway cofactor biosynthesis; biotin biosynthesis; biotin from 7,8-diaminononanoate: step 1/2. Catalyzes a mechanistically unusual reaction, the ATP-dependent insertion of CO2 between the N7 and N8 nitrogen atoms of 7,8-diaminopelargonic acid (DAPA, also called 7,8-diammoniononanoate) to form a ureido ring. This Aeromonas salmonicida (strain A449) protein is ATP-dependent dethiobiotin synthetase BioD.